A 257-amino-acid polypeptide reads, in one-letter code: Anamorsin homolog (257 aa).

Positions 1-134 (MSDRKNVLFV…KVGSSDKVTL (134 aa)) are N-terminal SAM-like domain. Residues 135–168 (NPEMKENVVSAWKLDDNNSETISEDDLLEADDLI) form a linker region. [2Fe-2S] cluster is bound by residues C178, C187, C190, and C192. Residues 178–192 (CATTKKAKACKDCSC) are fe-S binding site A. Positions 218, 221, 229, and 232 each coordinate [4Fe-4S] cluster. 2 short sequence motifs (cx2C motif) span residues 218 to 221 (CGSC) and 229 to 232 (CASC). The fe-S binding site B stretch occupies residues 218 to 232 (CGSCYLGDAFRCASC).

This sequence belongs to the anamorsin family. As to quaternary structure, monomer. It depends on [2Fe-2S] cluster as a cofactor. Requires [4Fe-4S] cluster as cofactor.

The protein localises to the cytoplasm. Its subcellular location is the mitochondrion intermembrane space. Functionally, component of the cytosolic iron-sulfur (Fe-S) protein assembly (CIA) machinery. Required for the maturation of extramitochondrial Fe-S proteins. Part of an electron transfer chain functioning in an early step of cytosolic Fe-S biogenesis, facilitating the de novo assembly of a [4Fe-4S] cluster on the cytosolic Fe-S scaffold complex. Electrons are transferred from NADPH via a FAD- and FMN-containing diflavin oxidoreductase. Together with the diflavin oxidoreductase, also required for the assembly of the diferric tyrosyl radical cofactor of ribonucleotide reductase (RNR), probably by providing electrons for reduction during radical cofactor maturation in the catalytic small subunit. The polypeptide is Anamorsin homolog (Acyrthosiphon pisum (Pea aphid)).